The following is a 326-amino-acid chain: Ornithine carbamoyltransferase (326 aa).

Residues 57-60, Gln-84, Arg-108, and 135-138 each bind carbamoyl phosphate; these read STRT and HPTQ. Residues Asn-169, Asp-233, and 237–238 contribute to the L-ornithine site; that span reads SM. A carbamoyl phosphate-binding site is contributed by 275–276; the sequence is CL.

It belongs to the aspartate/ornithine carbamoyltransferase superfamily. OTCase family.

It is found in the cytoplasm. The enzyme catalyses carbamoyl phosphate + L-ornithine = L-citrulline + phosphate + H(+). It functions in the pathway amino-acid biosynthesis; L-arginine biosynthesis; L-arginine from L-ornithine and carbamoyl phosphate: step 1/3. In terms of biological role, reversibly catalyzes the transfer of the carbamoyl group from carbamoyl phosphate (CP) to the N(epsilon) atom of ornithine (ORN) to produce L-citrulline. The polypeptide is Ornithine carbamoyltransferase (Escherichia coli O6:K15:H31 (strain 536 / UPEC)).